Reading from the N-terminus, the 175-residue chain is Homeobox expressed in ES cells 1 (175 aa).

The interval methionine 1 to proline 44 is disordered. Positions glycine 108–histidine 167 form a DNA-binding region, homeobox.

The protein belongs to the ANF homeobox family. Interacts with TLE1.

It is found in the nucleus. In terms of biological role, required for the normal development of the forebrain, eyes and other anterior structures such as the olfactory placodes and pituitary gland. Possible transcriptional repressor. Binds to the palindromic PIII sequence, 5'-AGCTTGAGTCTAATTGAATTAACTGTAC-3'. This Oryctolagus cuniculus (Rabbit) protein is Homeobox expressed in ES cells 1 (HESX1).